The sequence spans 349 residues: tRNA-specific 2-thiouridylase MnmA (349 aa).

Residues Leu6–Ser13 and Met32 contribute to the ATP site. Cys103 serves as the catalytic Nucleophile. Cysteines 103 and 195 form a disulfide. Position 127 (Gly127) interacts with ATP. The segment at Lys145 to Gln147 is interaction with tRNA. Cys195 serves as the catalytic Cysteine persulfide intermediate.

This sequence belongs to the MnmA/TRMU family.

The protein localises to the cytoplasm. It catalyses the reaction S-sulfanyl-L-cysteinyl-[protein] + uridine(34) in tRNA + AH2 + ATP = 2-thiouridine(34) in tRNA + L-cysteinyl-[protein] + A + AMP + diphosphate + H(+). Functionally, catalyzes the 2-thiolation of uridine at the wobble position (U34) of tRNA, leading to the formation of s(2)U34. The polypeptide is tRNA-specific 2-thiouridylase MnmA (Pseudothermotoga lettingae (strain ATCC BAA-301 / DSM 14385 / NBRC 107922 / TMO) (Thermotoga lettingae)).